Consider the following 1136-residue polypeptide: Coiled-coil domain-containing protein 136 (1136 aa).

A disordered region spans residues 1-46 (MQAMDGEVLLPALYEEEEEEEEEEEEVEEEQVEKGGSLGSLSMGKH). Residues 14-31 (YEEEEEEEEEEEEVEEEQ) show a composition bias toward acidic residues. Residue Ser50 is modified to Phosphoserine. Coiled-coil stretches lie at residues 293 to 631 (VMQL…QNQE) and 681 to 730 (LQAL…QTQS). Disordered regions lie at residues 741 to 773 (GKNS…KSYV), 814 to 837 (GSVS…DPAE), 965 to 990 (NRPS…NGVR), and 1040 to 1111 (KKER…PDPP). Over residues 743–752 (NSGSRAPSTE) the composition is skewed to polar residues. Positions 839–972 (EDLEHFEETV…KENRPSISSE (134 aa)) form a coiled coil. A compositionally biased stretch (low complexity) spans 976–989 (KNVNKNMNKNANGV). A coiled-coil region spans residues 1017–1057 (YYKASQRRLDELMKEEKEIEEARKKEREKKAKKDLCKLATN). Positions 1040-1052 (KKEREKKAKKDLC) are enriched in basic and acidic residues. Acidic residues predominate over residues 1067–1091 (EPTEDEEENFEEYREGEDESCEAAE). Residues 1112–1132 (IFSLPLVGLVVISALLWCWWA) form a helical membrane-spanning segment.

As to expression, present at high level in testis (at protein level).

Its subcellular location is the cytoplasmic vesicle. The protein resides in the secretory vesicle. It is found in the acrosome membrane. Its function is as follows. May play a role in acrosome formation in spermatogenesis and in fertilization. The protein is Coiled-coil domain-containing protein 136 (Ccdc136) of Mus musculus (Mouse).